The primary structure comprises 1241 residues: ATP-dependent helicase/nuclease subunit A (1241 aa).

The region spanning 12-485 is the UvrD-like helicase ATP-binding domain; that stretch reads SQWTDDQWKA…IDLAKNFRSR (474 aa). Residue 33 to 40 coordinates ATP; sequence AAAGSGKT. Residues 505–805 enclose the UvrD-like helicase C-terminal domain; the sequence is GEIDYDADAE…RIMTIHKSKG (301 aa).

It belongs to the helicase family. AddA subfamily. As to quaternary structure, heterodimer of AddA and AddB/RexB. The cofactor is Mg(2+).

The catalysed reaction is Couples ATP hydrolysis with the unwinding of duplex DNA by translocating in the 3'-5' direction.. The enzyme catalyses ATP + H2O = ADP + phosphate + H(+). In terms of biological role, the heterodimer acts as both an ATP-dependent DNA helicase and an ATP-dependent, dual-direction single-stranded exonuclease. Recognizes the chi site generating a DNA molecule suitable for the initiation of homologous recombination. The AddA nuclease domain is required for chi fragment generation; this subunit has the helicase and 3' -&gt; 5' nuclease activities. The sequence is that of ATP-dependent helicase/nuclease subunit A from Bacillus cereus (strain Q1).